The chain runs to 75 residues: Conotoxin Vn5.5 (75 aa).

Residues Met1 to Pro19 form the signal peptide. The propeptide occupies Asn20–Lys59. At Gln60 the chain carries Pyrrolidone carboxylic acid.

The protein belongs to the conotoxin T superfamily. Contains 2 disulfide bonds that can be either 'C1-C3, C2-C4' or 'C1-C4, C2-C3', since these disulfide connectivities have been observed for conotoxins with cysteine framework V (for examples, see AC P0DQQ7 and AC P81755). In terms of tissue distribution, expressed by the venom duct.

Its subcellular location is the secreted. In Conus ventricosus (Mediterranean cone), this protein is Conotoxin Vn5.5.